A 90-amino-acid polypeptide reads, in one-letter code: Putative antitoxin VapB8 (90 aa).

A disordered region spans residues 1–56 (MEKSRCHAVAHGGGCAGSAKSHKSGGRCGQGRGAGDSHGTRGAGRRYRAASAPHPL). The span at 26 to 36 (GRCGQGRGAGD) shows a compositional bias: gly residues.

Functionally, antitoxin component of a possible type II toxin-antitoxin (TA) system. The cognate toxin is VapC8. The protein is Putative antitoxin VapB8 (vapB8) of Mycobacterium tuberculosis (strain ATCC 25618 / H37Rv).